The sequence spans 399 residues: RNA polymerase sigma factor SigA1 (399 aa).

The segment at 1-73 (MTQLISIDKE…DEDSVGEDED (73 aa)) is disordered. Residues 60–73 (DAIDDEDSVGEDED) are compositionally biased toward acidic residues. The tract at residues 167 to 237 (MVQSNLRLVV…TRAIADQSRT (71 aa)) is sigma-70 factor domain-2. The short motif at 191–194 (DLIQ) is the Interaction with polymerase core subunit RpoC element. Positions 246–321 (ETISRIKKTT…EADGETPEDE (76 aa)) are sigma-70 factor domain-3. The tract at residues 334-387 (VLSTLSPRERDVLRLRYGLDDGRMKTLEEIGQLFNVTRERIRQIEAKALRKLRH) is sigma-70 factor domain-4. The segment at residues 360-379 (LEEIGQLFNVTRERIRQIEA) is a DNA-binding region (H-T-H motif).

It belongs to the sigma-70 factor family. RpoD/SigA subfamily. In terms of assembly, interacts transiently with the RNA polymerase catalytic core.

It localises to the cytoplasm. Sigma factors are initiation factors that promote the attachment of RNA polymerase to specific initiation sites and are then released. This sigma factor is the primary sigma factor during exponential growth. This chain is RNA polymerase sigma factor SigA1, found in Synechococcus elongatus (strain ATCC 33912 / PCC 7942 / FACHB-805) (Anacystis nidulans R2).